A 179-amino-acid chain; its full sequence is Large ribosomal subunit protein uL5 (179 aa).

Belongs to the universal ribosomal protein uL5 family. As to quaternary structure, part of the 50S ribosomal subunit; part of the 5S rRNA/L5/L18/L25 subcomplex. Contacts the 5S rRNA and the P site tRNA. Forms a bridge to the 30S subunit in the 70S ribosome.

Its function is as follows. This is one of the proteins that bind and probably mediate the attachment of the 5S RNA into the large ribosomal subunit, where it forms part of the central protuberance. In the 70S ribosome it contacts protein S13 of the 30S subunit (bridge B1b), connecting the 2 subunits; this bridge is implicated in subunit movement. Contacts the P site tRNA; the 5S rRNA and some of its associated proteins might help stabilize positioning of ribosome-bound tRNAs. This Pectobacterium carotovorum subsp. carotovorum (strain PC1) protein is Large ribosomal subunit protein uL5.